Here is a 177-residue protein sequence, read N- to C-terminus: DELTA-stichotoxin-Hcr4b (177 aa).

The tract at residues 3–12 is plays an important role in the hemolytic activity; sequence ALAGTITLGA. The interval 11–30 is N-terminal region; the sequence is GASLGFQILDKVLGELGKVS. 7 residues coordinate phosphocholine: S54, V87, S105, P107, Y133, Y137, and Y138. The segment at 105-120 is trp-rich region, which is important for the binding to lipid membrane; sequence SVPFDYNLYSNWWDVK.

The protein belongs to the actinoporin family. Sea anemone subfamily. Octamer or nonamer in membranes. Monomer in the soluble state.

Its subcellular location is the secreted. It is found in the nematocyst. It localises to the target cell membrane. In terms of biological role, pore-forming protein that forms cations-selective hydrophilic pores of around 1 nm and causes cardiac stimulation and cytolysis. Pore formation is a multi-step process that involves specific recognition of membrane sphingomyelin (but neither cholesterol nor phosphatidylcholine) using aromatic rich region and adjacent phosphocholine (POC) binding site, firm binding to the membrane (mainly driven by hydrophobic interactions) accompanied by the transfer of the N-terminal region to the lipid-water interface and finally pore formation after oligomerization of monomers. Cytolytic effects include red blood cells hemolysis, platelet aggregation and lysis, cytotoxic and cytostatic effects on fibroblasts. Lethality in mammals has been ascribed to severe vasospasm of coronary vessels, cardiac arrhythmia, and inotropic effects. Preincubation with exogenous sphingomyeline causes complete loss of hemolytic activity. The sequence is that of DELTA-stichotoxin-Hcr4b from Radianthus crispa (Leathery sea anemone).